Here is a 571-residue protein sequence, read N- to C-terminus: DM7 family protein CG15332 (571 aa).

A disordered region spans residues 440–472 (TRDDGINTADYQSQFPELEPEPEPEPEDEGEDV). Positions 457–471 (LEPEPEPEPEDEGED) are enriched in acidic residues.

Belongs to the DM7 family.

This chain is DM7 family protein CG15332, found in Drosophila melanogaster (Fruit fly).